Here is a 358-residue protein sequence, read N- to C-terminus: UPF0575 protein C19orf67 (358 aa).

The disordered stretch occupies residues 1–84; sequence MATEQWFEGS…PGPAPPRLSL (84 aa). Pro residues-rich tracts occupy residues 17 to 32 and 70 to 80; these read ETPP…PPCG and PLVPRPGPAPP.

This sequence belongs to the UPF0575 family.

The sequence is that of UPF0575 protein C19orf67 (C19orf67) from Homo sapiens (Human).